Consider the following 486-residue polypeptide: Palmitoyltransferase pfa4 (486 aa).

At 1-15 the chain is on the cytoplasmic side; that stretch reads MTNLQTGPTTRGLQR. Residues 16–36 form a helical membrane-spanning segment; the sequence is FAIPAVCGLIIFLGYYSQYLF. Over 37-51 the chain is Lumenal; sequence NTSADLAPGPLTCRE. Residues 52-72 form a helical membrane-spanning segment; sequence SLIFNILLVCLWLTYYQACTV. At 73–146 the chain is on the cytoplasmic side; the sequence is DPGQYKFPPK…NCVSLQTFPH (74 aa). A compositionally biased stretch (basic and acidic residues) spans 81 to 91; the sequence is PKEKEDGDNNN. Residues 81–101 form a disordered region; the sequence is PKEKEDGDNNNKRGGRGPQKA. The 51-residue stretch at 102 to 152 folds into the DHHC domain; that stretch reads KWCKKCDAPKPPRAHHCRHCARCIPRMDHHCPWTGNCVSLQTFPHFLRFLV. Residue Cys132 is the S-palmitoyl cysteine intermediate of the active site. A helical membrane pass occupies residues 147–166; sequence FLRFLVYTNAALVYFARLLW. Residues 167 to 178 are Lumenal-facing; the sequence is TRLYYGLWDQRH. A helical transmembrane segment spans residues 179–201; sequence VPAYLGPSVGALLGCTMLSIAWF. Topologically, residues 202 to 486 are cytoplasmic; it reads ATQFALMVLL…RKVKSNGVHE (285 aa). Residues 314 to 420 are disordered; that stretch reads NDRVGMWPPP…QDGRAWMNSE (107 aa). 2 stretches are compositionally biased toward basic and acidic residues: residues 324 to 333 and 346 to 376; these read DPEKLRRERA and LNTEKPEVDYYRSSEDMKTAFKRRQQEDLRR. Residues 386-399 show a composition bias toward acidic residues; that stretch reads EEDEIMAELEEDEG.

The protein belongs to the DHHC palmitoyltransferase family. PFA4 subfamily.

The protein resides in the endoplasmic reticulum membrane. The catalysed reaction is L-cysteinyl-[protein] + hexadecanoyl-CoA = S-hexadecanoyl-L-cysteinyl-[protein] + CoA. Its function is as follows. Mediates the reversible addition of palmitate to target proteins, thereby regulating their membrane association and biological function. The polypeptide is Palmitoyltransferase pfa4 (Neurospora crassa (strain ATCC 24698 / 74-OR23-1A / CBS 708.71 / DSM 1257 / FGSC 987)).